Consider the following 161-residue polypeptide: Regulator of ribonuclease activity A (161 aa).

It belongs to the RraA family. As to quaternary structure, homotrimer. Binds to both RNA-binding sites in the C-terminal region of Rne and to RhlB.

The protein resides in the cytoplasm. Globally modulates RNA abundance by binding to RNase E (Rne) and regulating its endonucleolytic activity. Can modulate Rne action in a substrate-dependent manner by altering the composition of the degradosome. Modulates RNA-binding and helicase activities of the degradosome. The protein is Regulator of ribonuclease activity A of Tolumonas auensis (strain DSM 9187 / NBRC 110442 / TA 4).